Here is a 133-residue protein sequence, read N- to C-terminus: Crossover junction endodeoxyribonuclease Hjc (133 aa).

E12 contacts Mg(2+). The active site involves S32. 2 residues coordinate Mg(2+): D36 and E49.

This sequence belongs to the Holliday junction resolvase Hjc family. Homodimer. The cofactor is Mg(2+).

The enzyme catalyses Endonucleolytic cleavage at a junction such as a reciprocal single-stranded crossover between two homologous DNA duplexes (Holliday junction).. Its function is as follows. A structure-specific endonuclease that resolves Holliday junction (HJ) intermediates during genetic recombination. Cleaves 4-way DNA junctions introducing paired nicks in opposing strands, leaving a 5'-terminal phosphate and a 3'-terminal hydroxyl group that are subsequently ligated to produce recombinant products. This chain is Crossover junction endodeoxyribonuclease Hjc, found in Methanocaldococcus jannaschii (strain ATCC 43067 / DSM 2661 / JAL-1 / JCM 10045 / NBRC 100440) (Methanococcus jannaschii).